We begin with the raw amino-acid sequence, 306 residues long: Glutaminase (306 aa).

Residues Ser-64, Asn-115, Glu-159, Asn-166, Tyr-190, Tyr-242, and Val-260 each contribute to the substrate site.

The protein belongs to the glutaminase family. Homotetramer.

The catalysed reaction is L-glutamine + H2O = L-glutamate + NH4(+). This is Glutaminase from Aliivibrio fischeri (strain MJ11) (Vibrio fischeri).